A 577-amino-acid polypeptide reads, in one-letter code: Laccase-25 (577 aa).

Residues 1 to 22 form the signal peptide; the sequence is MTLHWSLLLFIAIALVSSVAQA. 2 consecutive Plastocyanin-like domains span residues 30–147 and 158–313; these read NVGN…PRGG and KEHV…YAGA. N-linked (GlcNAc...) asparagine glycosylation is present at N33. 2 residues coordinate Cu cation: H81 and H83. N109 carries an N-linked (GlcNAc...) asparagine glycan. Positions 126 and 128 each coordinate Cu cation. N-linked (GlcNAc...) asparagine glycosylation is found at N169, N203, N208, N218, N332, N383, N396, N404, N441, and N459. In terms of domain architecture, Plastocyanin-like 3 spans 423–560; sequence DFPDTPPVVF…AMVLEVLDGP (138 aa). The Cu cation site is built by H477, H480, H482, H539, C540, H541, and H545.

It belongs to the multicopper oxidase family. It depends on Cu cation as a cofactor.

It localises to the secreted. Its subcellular location is the extracellular space. It is found in the apoplast. It catalyses the reaction 4 hydroquinone + O2 = 4 benzosemiquinone + 2 H2O. In terms of biological role, lignin degradation and detoxification of lignin-derived products. The chain is Laccase-25 (LAC25) from Oryza sativa subsp. japonica (Rice).